The sequence spans 152 residues: Peptide deformylase (152 aa).

The Fe cation site is built by cysteine 88 and histidine 130. Glutamate 131 is an active-site residue. Histidine 134 is a Fe cation binding site.

This sequence belongs to the polypeptide deformylase family. Fe(2+) is required as a cofactor.

The enzyme catalyses N-terminal N-formyl-L-methionyl-[peptide] + H2O = N-terminal L-methionyl-[peptide] + formate. Removes the formyl group from the N-terminal Met of newly synthesized proteins. Requires at least a dipeptide for an efficient rate of reaction. N-terminal L-methionine is a prerequisite for activity but the enzyme has broad specificity at other positions. This Syntrophomonas wolfei subsp. wolfei (strain DSM 2245B / Goettingen) protein is Peptide deformylase.